Reading from the N-terminus, the 293-residue chain is Probable endonuclease 4 (293 aa).

Zn(2+) contacts are provided by histidine 75, histidine 115, glutamate 153, aspartate 187, histidine 190, histidine 224, aspartate 237, histidine 239, and glutamate 269.

It belongs to the AP endonuclease 2 family. Zn(2+) serves as cofactor.

The enzyme catalyses Endonucleolytic cleavage to 5'-phosphooligonucleotide end-products.. Its function is as follows. Endonuclease IV plays a role in DNA repair. It cleaves phosphodiester bonds at apurinic or apyrimidinic (AP) sites, generating a 3'-hydroxyl group and a 5'-terminal sugar phosphate. In Chlamydia pneumoniae (Chlamydophila pneumoniae), this protein is Probable endonuclease 4.